The sequence spans 875 residues: MTLARFVLALMLGALPEVVGFDSVLNDSLHHSHRHSPPPGPHYPYYLPTQQRPPRTRPPPPLPRFPRPPRALPAQRPHALQAGHTPRPHPWGCPAGEPWVSVTDFGAPCLRWAEVPPFLERSPPASWAQLRGQRHNFCRSPDGAGRPWCFYGDARGKVDWGYCDCRHGSVRLRGGKNEFEGTVEVYASGVWGTVCSSHWDDSDASVICHQLQLGGKGIAKQTPFSGLGLIPIYWSNVRCRGDEENILLCEKDIWQGGVCPQKMAAAVTCSFSHGPTFPIIRLAGGSSVHEGRVELYHAGQWGTVCDDQWDDADAEVICRQLGLSGIAKAWHQAYFGEGSGPVMLDEVRCTGNELSIEQCPKSSWGEHNCGHKEDAGVSCTPLTDGVIRLAGGKGSHEGRLEVYYRGQWGTVCDDGWTELNTYVVCRQLGFKYGKQASANHFEESTGPIWLDDVSCSGKETRFLQCSRRQWGRHDCSHREDVSIACYPGGEGHRLSLGFPVRLVDGENKKEGRVEVFINGQWGTICDDGWTDKDAAVICRQLGYKGPARARTMAYFGEGKGPIHVDNVKCTGNERSLADCIKQDIGRHNCRHSEDAGVICDYFGKKASGNSNKESLSSVCGLRLLHRRQKRIIGGKNSLRGGWPWQVSLRLKSSHGDGRLLCGATLLSSCWVLTAAHCFKRYGNSTRSYAVRVGDYHTLVPEEFEEEIGVQQIVIHREYRPDRSDYDIALVRLQGPEEQCARFSSHVLPACLPLWRERPQKTASNCYITGWGDTGRAYSRTLQQAAIPLLPKRFCEERYKRRFTGRMLCAGNLHEHKRVDSCQGDSGGPLMCERPGESWVVYGVTSWGYGCGVKDSPGVYTKVSAFVPWIKSVTKL.

Positions Met-1–Gly-20 are cleaved as a signal peptide. Asn-26 is a glycosylation site (N-linked (GlcNAc...) asparagine). Residues Leu-29–Pro-88 are disordered. The span at Tyr-43 to Pro-53 shows a compositional bias: low complexity. Residues Thr-56–Ala-71 are compositionally biased toward pro residues. The 73-residue stretch at Cys-93–Cys-165 folds into the Kringle domain. 20 cysteine pairs are disulfide-bonded: Cys-93–Cys-165, Cys-109–Cys-149, Cys-138–Cys-163, Cys-195–Cys-259, Cys-208–Cys-269, Cys-239–Cys-249, Cys-305–Cys-369, Cys-318–Cys-379, Cys-349–Cys-359, Cys-412–Cys-475, Cys-425–Cys-485, Cys-455–Cys-465, Cys-525–Cys-589, Cys-538–Cys-599, Cys-569–Cys-579, Cys-619–Cys-750, Cys-661–Cys-677, Cys-765–Cys-831, Cys-794–Cys-808, and Cys-821–Cys-850. 4 consecutive SRCR domains span residues Val-170–Phe-271, Ile-280–Pro-381, Ile-387–Pro-487, and Val-500–Tyr-601. The interval Cys-619–Arg-630 is zymogen activation region. Positions Ile-631–Lys-874 constitute a Peptidase S1 domain. Residue His-676 is the Charge relay system of the active site. An N-linked (GlcNAc...) asparagine glycan is attached at Asn-683. The active-site Charge relay system is the Asp-726. The Charge relay system role is filled by Ser-825.

This sequence belongs to the peptidase S1 family.

It is found in the secreted. Its function is as follows. Plays a role in neuronal plasticity and the proteolytic action may subserve structural reorganizations associated with learning and memory operations. In Pan troglodytes (Chimpanzee), this protein is Neurotrypsin (PRSS12).